A 134-amino-acid chain; its full sequence is Arsenate reductase (134 aa).

Active-site nucleophile residues include Cys11, Cys83, and Cys90. Intrachain disulfides connect Cys11–Cys83 and Cys83–Cys90.

It belongs to the low molecular weight phosphotyrosine protein phosphatase family. Thioredoxin-coupled ArsC subfamily.

The protein resides in the cytoplasm. It carries out the reaction arsenate + [thioredoxin]-dithiol + H(+) = arsenite + [thioredoxin]-disulfide + H2O. Functionally, catalyzes the reduction of arsenate [As(V)] to arsenite [As(III)]. The polypeptide is Arsenate reductase (Bacillus cereus (strain G9842)).